A 271-amino-acid polypeptide reads, in one-letter code: 2,3,4,5-tetrahydropyridine-2,6-dicarboxylate N-succinyltransferase (271 aa).

Arg102 and Asp139 together coordinate substrate.

Belongs to the transferase hexapeptide repeat family. In terms of assembly, homotrimer.

It localises to the cytoplasm. It catalyses the reaction (S)-2,3,4,5-tetrahydrodipicolinate + succinyl-CoA + H2O = (S)-2-succinylamino-6-oxoheptanedioate + CoA. It participates in amino-acid biosynthesis; L-lysine biosynthesis via DAP pathway; LL-2,6-diaminopimelate from (S)-tetrahydrodipicolinate (succinylase route): step 1/3. The polypeptide is 2,3,4,5-tetrahydropyridine-2,6-dicarboxylate N-succinyltransferase (Coxiella burnetii (strain Dugway 5J108-111)).